Reading from the N-terminus, the 803-residue chain is Phenylalanine--tRNA ligase beta subunit (803 aa).

The region spanning 39 to 152 is the tRNA-binding domain; that stretch reads TPGFQKVVAG…PDASPGADAA (114 aa). The region spanning 406–480 is the B5 domain; the sequence is RQPVTIELRP…RLYGYNRIPV (75 aa). Mg(2+)-binding residues include Asp-458, Asp-464, Glu-467, and Glu-468. Residues 709-802 form the FDX-ACB domain; the sequence is PRFPAVERDL…LEERLGASLR (94 aa).

The protein belongs to the phenylalanyl-tRNA synthetase beta subunit family. Type 1 subfamily. As to quaternary structure, tetramer of two alpha and two beta subunits. The cofactor is Mg(2+).

Its subcellular location is the cytoplasm. The catalysed reaction is tRNA(Phe) + L-phenylalanine + ATP = L-phenylalanyl-tRNA(Phe) + AMP + diphosphate + H(+). In Moorella thermoacetica (strain ATCC 39073 / JCM 9320), this protein is Phenylalanine--tRNA ligase beta subunit.